A 426-amino-acid chain; its full sequence is Glutamate-1-semialdehyde 2,1-aminomutase (426 aa).

Position 265 is an N6-(pyridoxal phosphate)lysine (Lys265).

This sequence belongs to the class-III pyridoxal-phosphate-dependent aminotransferase family. HemL subfamily. As to quaternary structure, homodimer. Pyridoxal 5'-phosphate serves as cofactor.

The protein resides in the cytoplasm. It carries out the reaction (S)-4-amino-5-oxopentanoate = 5-aminolevulinate. It participates in porphyrin-containing compound metabolism; protoporphyrin-IX biosynthesis; 5-aminolevulinate from L-glutamyl-tRNA(Glu): step 2/2. The polypeptide is Glutamate-1-semialdehyde 2,1-aminomutase (Pseudoalteromonas translucida (strain TAC 125)).